The sequence spans 188 residues: Chitin synthase 2 (188 aa).

The protein belongs to the chitin synthase family.

Its subcellular location is the cell membrane. It carries out the reaction [(1-&gt;4)-N-acetyl-beta-D-glucosaminyl](n) + UDP-N-acetyl-alpha-D-glucosamine = [(1-&gt;4)-N-acetyl-beta-D-glucosaminyl](n+1) + UDP + H(+). Functionally, polymerizes chitin, a structural polymer of the cell wall and septum, by transferring the sugar moiety of UDP-GlcNAc to the non-reducing end of the growing chitin polymer. In Exophiala jeanselmei (Dematiaceous fungus), this protein is Chitin synthase 2 (CHS2).